A 449-amino-acid chain; its full sequence is L-seryl-tRNA(Sec) selenium transferase (449 aa).

An N6-(pyridoxal phosphate)lysine modification is found at lysine 286.

The protein belongs to the SelA family. The cofactor is pyridoxal 5'-phosphate.

It localises to the cytoplasm. The enzyme catalyses L-seryl-tRNA(Sec) + selenophosphate + H(+) = L-selenocysteinyl-tRNA(Sec) + phosphate. The protein operates within aminoacyl-tRNA biosynthesis; selenocysteinyl-tRNA(Sec) biosynthesis; selenocysteinyl-tRNA(Sec) from L-seryl-tRNA(Sec) (bacterial route): step 1/1. In terms of biological role, converts seryl-tRNA(Sec) to selenocysteinyl-tRNA(Sec) required for selenoprotein biosynthesis. The sequence is that of L-seryl-tRNA(Sec) selenium transferase from Sulfurimonas denitrificans (strain ATCC 33889 / DSM 1251) (Thiomicrospira denitrificans (strain ATCC 33889 / DSM 1251)).